Consider the following 314-residue polypeptide: Deoxyhypusine hydroxylase (314 aa).

Residue M1 is modified to N-acetylmethionine. HEAT-like PBS-type repeat units lie at residues 61 to 87 (LAHE…VLND), 94 to 120 (VRHE…SLSS), 188 to 214 (ERYA…SLSA), 219 to 245 (LRHE…VLRD), and 252 to 278 (VRHE…FSKD). Fe cation is bound by residues H63, E64, H96, and E97. 4 residues coordinate Fe cation: H221, E222, H254, and E255.

The protein belongs to the deoxyhypusine hydroxylase family. It depends on Fe(2+) as a cofactor.

The enzyme catalyses [eIF5A protein]-deoxyhypusine + AH2 + O2 = [eIF5A protein]-hypusine + A + H2O. It participates in protein modification; eIF5A hypusination. Its function is as follows. Catalyzes the hydroxylation of the N(6)-(4-aminobutyl)-L-lysine intermediate to form hypusine, an essential post-translational modification only found in mature eIF-5A factor. This chain is Deoxyhypusine hydroxylase, found in Arabidopsis thaliana (Mouse-ear cress).